A 318-amino-acid chain; its full sequence is Deoxyhypusine hydroxylase (318 aa).

HEAT-like PBS-type repeat units follow at residues 70-96 (LKHE…VLEN) and 103-129 (VRHE…YFKE). 8 residues coordinate Fe cation: H72, E73, H105, E106, H231, E232, H264, and E265. An HEAT-like PBS-type 3 repeat occupies 262–288 (VRHEAAEALGSIATDECLPVLQSFLND).

It belongs to the deoxyhypusine hydroxylase family. It depends on Fe(2+) as a cofactor.

It is found in the cytoplasm. Its subcellular location is the nucleus. The catalysed reaction is [eIF5A protein]-deoxyhypusine + AH2 + O2 = [eIF5A protein]-hypusine + A + H2O. The protein operates within protein modification; eIF5A hypusination. Its function is as follows. Catalyzes the hydroxylation of the N(6)-(4-aminobutyl)-L-lysine intermediate to form hypusine, an essential post-translational modification only found in mature eIF-5A factor. In Candida albicans (strain SC5314 / ATCC MYA-2876) (Yeast), this protein is Deoxyhypusine hydroxylase.